The chain runs to 386 residues: Formate-dependent phosphoribosylglycinamide formyltransferase (386 aa).

Residues 10–11 (EL) and E70 contribute to the N(1)-(5-phospho-beta-D-ribosyl)glycinamide site. ATP-binding positions include R102, K143, 148 to 153 (SSGKGQ), 183 to 186 (EAFV), and E191. The ATP-grasp domain maps to 107-298 (DLAAKELGLK…EFELHLRAIL (192 aa)). 2 residues coordinate Mg(2+): E256 and E268. Residues D275, K346, and 353–354 (RR) each bind N(1)-(5-phospho-beta-D-ribosyl)glycinamide.

Belongs to the PurK/PurT family. Homodimer.

The catalysed reaction is N(1)-(5-phospho-beta-D-ribosyl)glycinamide + formate + ATP = N(2)-formyl-N(1)-(5-phospho-beta-D-ribosyl)glycinamide + ADP + phosphate + H(+). The protein operates within purine metabolism; IMP biosynthesis via de novo pathway; N(2)-formyl-N(1)-(5-phospho-D-ribosyl)glycinamide from N(1)-(5-phospho-D-ribosyl)glycinamide (formate route): step 1/1. Functionally, involved in the de novo purine biosynthesis. Catalyzes the transfer of formate to 5-phospho-ribosyl-glycinamide (GAR), producing 5-phospho-ribosyl-N-formylglycinamide (FGAR). Formate is provided by PurU via hydrolysis of 10-formyl-tetrahydrofolate. The sequence is that of Formate-dependent phosphoribosylglycinamide formyltransferase from Flavobacterium psychrophilum (strain ATCC 49511 / DSM 21280 / CIP 103535 / JIP02/86).